Consider the following 90-residue polypeptide: Large ribosomal subunit protein bL27 (90 aa).

The protein belongs to the bacterial ribosomal protein bL27 family.

The polypeptide is Large ribosomal subunit protein bL27 (Paracoccus denitrificans (strain Pd 1222)).